The primary structure comprises 513 residues: 2-isopropylmalate synthase (513 aa).

The Pyruvate carboxyltransferase domain occupies isoleucine 4–alanine 266. Residues aspartate 13, histidine 201, histidine 203, and asparagine 237 each coordinate Mn(2+). Residues isoleucine 390–isoleucine 513 are regulatory domain.

It belongs to the alpha-IPM synthase/homocitrate synthase family. LeuA type 1 subfamily. As to quaternary structure, homodimer. The cofactor is Mn(2+).

It is found in the cytoplasm. The enzyme catalyses 3-methyl-2-oxobutanoate + acetyl-CoA + H2O = (2S)-2-isopropylmalate + CoA + H(+). It participates in amino-acid biosynthesis; L-leucine biosynthesis; L-leucine from 3-methyl-2-oxobutanoate: step 1/4. Functionally, catalyzes the condensation of the acetyl group of acetyl-CoA with 3-methyl-2-oxobutanoate (2-ketoisovalerate) to form 3-carboxy-3-hydroxy-4-methylpentanoate (2-isopropylmalate). This is 2-isopropylmalate synthase from Lactococcus lactis subsp. lactis (strain IL1403) (Streptococcus lactis).